A 295-amino-acid polypeptide reads, in one-letter code: Cyclin-G1 (295 aa).

This sequence belongs to the cyclin family. Cyclin G subfamily.

The protein resides in the nucleus. May play a role in growth regulation. Is associated with G2/M phase arrest in response to DNA damage. May be an intermediate by which p53 mediates its role as an inhibitor of cellular proliferation. The protein is Cyclin-G1 (CCNG1) of Pongo abelii (Sumatran orangutan).